The following is a 247-amino-acid chain: ATP synthase subunit a, chloroplastic (247 aa).

The next 5 membrane-spanning stretches (helical) occupy residues Gln-38–Val-58, Val-95–Leu-115, Ile-134–Thr-154, Leu-199–Leu-219, and Gly-220–Gly-240.

It belongs to the ATPase A chain family. As to quaternary structure, F-type ATPases have 2 components, CF(1) - the catalytic core - and CF(0) - the membrane proton channel. CF(1) has five subunits: alpha(3), beta(3), gamma(1), delta(1), epsilon(1). CF(0) has four main subunits: a, b, b' and c.

It is found in the plastid. The protein resides in the chloroplast thylakoid membrane. Functionally, key component of the proton channel; it plays a direct role in the translocation of protons across the membrane. This is ATP synthase subunit a, chloroplastic from Dioscorea elephantipes (Elephant's foot yam).